The primary structure comprises 414 residues: Imidazolonepropionase (414 aa).

The segment covering 1 to 20 has biased composition (polar residues); that stretch reads MSHQLFRNTRIYSPMDSGQP. The tract at residues 1–26 is disordered; the sequence is MSHQLFRNTRIYSPMDSGQPSAGKAQ. Positions 81 and 83 each coordinate Fe(3+). H81 and H83 together coordinate Zn(2+). The 4-imidazolone-5-propanoate site is built by R90, Y153, and H186. An N-formimidoyl-L-glutamate-binding site is contributed by Y153. H251 is a Fe(3+) binding site. H251 lines the Zn(2+) pocket. E254 contacts 4-imidazolone-5-propanoate. D325 lines the Fe(3+) pocket. D325 lines the Zn(2+) pocket. N-formimidoyl-L-glutamate contacts are provided by N327 and G329. S330 contributes to the 4-imidazolone-5-propanoate binding site.

The protein belongs to the metallo-dependent hydrolases superfamily. HutI family. The cofactor is Zn(2+). Requires Fe(3+) as cofactor.

It is found in the cytoplasm. The catalysed reaction is 4-imidazolone-5-propanoate + H2O = N-formimidoyl-L-glutamate. It functions in the pathway amino-acid degradation; L-histidine degradation into L-glutamate; N-formimidoyl-L-glutamate from L-histidine: step 3/3. Functionally, catalyzes the hydrolytic cleavage of the carbon-nitrogen bond in imidazolone-5-propanoate to yield N-formimidoyl-L-glutamate. It is the third step in the universal histidine degradation pathway. In Desulfotalea psychrophila (strain LSv54 / DSM 12343), this protein is Imidazolonepropionase.